We begin with the raw amino-acid sequence, 297 residues long: ATP phosphoribosyltransferase (297 aa).

The protein belongs to the ATP phosphoribosyltransferase family.

The protein localises to the cytoplasm. It carries out the reaction 1-(5-phospho-beta-D-ribosyl)-ATP + diphosphate = 5-phospho-alpha-D-ribose 1-diphosphate + ATP. It participates in amino-acid biosynthesis; L-histidine biosynthesis; L-histidine from 5-phospho-alpha-D-ribose 1-diphosphate: step 1/9. Functionally, catalyzes the condensation of ATP and 5-phosphoribose 1-diphosphate to form N'-(5'-phosphoribosyl)-ATP (PR-ATP). Has a crucial role in the pathway because the rate of histidine biosynthesis seems to be controlled primarily by regulation of the enzymatic activity. In Kluyveromyces lactis (strain ATCC 8585 / CBS 2359 / DSM 70799 / NBRC 1267 / NRRL Y-1140 / WM37) (Yeast), this protein is ATP phosphoribosyltransferase (HIS1).